Reading from the N-terminus, the 241-residue chain is MKHKIRLGVNVDHVATLRQVRGGTTAYPNLLDMVKKSVKGGAEQITIHLREDRRHIQLEDLKVLSKHCSVPLNLEMAATSQMVTYAKKYRPDWVCFVPEKRAELTTEGGLDVKKGFKKMFPMVEKLQRIGIEISMFIEPSLEQVEASYEIGADAVEFHTGKWVMLKGARKAAEWKRLCDAAEWAHYLGLNVHAGHGLDYEHSKLINKLPHLQEVNIGHSLVCYALEHGMEESVRKMRKILK.

Residue Asn10 participates in 3-amino-2-oxopropyl phosphate binding. 12–13 is a 1-deoxy-D-xylulose 5-phosphate binding site; that stretch reads DH. 3-amino-2-oxopropyl phosphate is bound at residue Arg21. His48 serves as the catalytic Proton acceptor. Residues Arg50 and His55 each coordinate 1-deoxy-D-xylulose 5-phosphate. Residue Glu75 is the Proton acceptor of the active site. Thr105 lines the 1-deoxy-D-xylulose 5-phosphate pocket. Residue His195 is the Proton donor of the active site. 3-amino-2-oxopropyl phosphate-binding positions include Gly196 and 217–218; that span reads GH.

The protein belongs to the PNP synthase family. In terms of assembly, homooctamer; tetramer of dimers.

The protein resides in the cytoplasm. It catalyses the reaction 3-amino-2-oxopropyl phosphate + 1-deoxy-D-xylulose 5-phosphate = pyridoxine 5'-phosphate + phosphate + 2 H2O + H(+). It participates in cofactor biosynthesis; pyridoxine 5'-phosphate biosynthesis; pyridoxine 5'-phosphate from D-erythrose 4-phosphate: step 5/5. Its function is as follows. Catalyzes the complicated ring closure reaction between the two acyclic compounds 1-deoxy-D-xylulose-5-phosphate (DXP) and 3-amino-2-oxopropyl phosphate (1-amino-acetone-3-phosphate or AAP) to form pyridoxine 5'-phosphate (PNP) and inorganic phosphate. The protein is Pyridoxine 5'-phosphate synthase of Bdellovibrio bacteriovorus (strain ATCC 15356 / DSM 50701 / NCIMB 9529 / HD100).